We begin with the raw amino-acid sequence, 135 residues long: Probable transporter PD_1892 (135 aa).

4 consecutive transmembrane segments (helical) span residues 4–24 (YWYP…LLLL), 45–65 (AQNI…TVIF), 71–91 (VTVA…GLGT), and 114–134 (IVAT…MGVY).

The protein belongs to the TsuA/YedE (TC 9.B.102) family.

The protein resides in the cell inner membrane. This Xylella fastidiosa (strain Temecula1 / ATCC 700964) protein is Probable transporter PD_1892.